The primary structure comprises 279 residues: Fatty acid elongase 2 (279 aa).

A run of 7 helical transmembrane segments spans residues 16 to 36, 61 to 81, 112 to 132, 138 to 158, 164 to 184, 196 to 216, and 242 to 262; these read LMLE…ALVW, AIIV…IVVV, FWIG…MFLL, PPFL…HTYC, MVLF…YFAM, FAPF…LVTT, and MGVI…LNSY. Residues 142–146 carry the HxxHH motif motif; that stretch reads HWYHH. Catalysis depends on His145, which acts as the Nucleophile.

The protein belongs to the ELO family.

The protein localises to the endoplasmic reticulum membrane. The enzyme catalyses an acyl-CoA + malonyl-CoA + H(+) = a 3-oxoacyl-CoA + CO2 + CoA. The protein operates within lipid metabolism; fatty acid biosynthesis. Its function is as follows. Involved in the synthesis of fatty acids. Elongates C10 fatty acids to C14. Required for the maintenance of the global lipidome profile in this parasite. The polypeptide is Fatty acid elongase 2 (Trypanosoma cruzi (strain CL Brener)).